Reading from the N-terminus, the 601-residue chain is Glutathione-regulated potassium-efflux system protein KefB (601 aa).

The next 13 helical transmembrane spans lie at 4-24, 29-49, 55-75, 87-107, 115-135, 152-172, 177-197, 207-227, 230-250, 268-288, 291-311, 326-346, and 356-376; these read SDLLLAGVLFLFAAVIAVPLA, IGAVLGYLLAGIAIGPWGLGF, EILHFSELGVVFLMFIIGLEL, IFGVGAAQVMLSAAILGGLLM, AAVVGGIGLAMSSTAMALQLM, VLLFQDLAVIPALALVPLLAG, HVNWLTVGMKVLAFAGMLIGG, FIASSGVREVFTAATLLLVLG, LFMEALGLSMALGTFIAGVLL, GLLLGLFFISVGMALNLGVLY, LLWVAVSVAVLVAVKMLVLYL, FAGVLSQGGEFAFVLFSLPAS, and ALLLVAVTLSMMTTPLLMKGI. Positions 400 to 519 constitute an RCK N-terminal domain; the sequence is KPQVIIVGFG…AGVTQFSRET (120 aa).

It belongs to the monovalent cation:proton antiporter 2 (CPA2) transporter (TC 2.A.37) family. KefB subfamily. As to quaternary structure, interacts with the regulatory subunit KefG.

The protein localises to the cell inner membrane. Pore-forming subunit of a potassium efflux system that confers protection against electrophiles. Catalyzes K(+)/H(+) antiport. The protein is Glutathione-regulated potassium-efflux system protein KefB of Klebsiella pneumoniae (strain 342).